Reading from the N-terminus, the 134-residue chain is Small ribosomal subunit protein uS9 (134 aa).

The disordered stretch occupies residues 109–134 (DARRTEPHKPSKSSKGPRAKRQKSYR). Basic residues predominate over residues 118 to 134 (PSKSSKGPRAKRQKSYR).

The protein belongs to the universal ribosomal protein uS9 family.

This is Small ribosomal subunit protein uS9 from Methanococcus maripaludis (strain C7 / ATCC BAA-1331).